Reading from the N-terminus, the 832-residue chain is MEFIDYQAFETAPDNNDKSGTNGEVSLPEPVSRLNISSFSLDYKPLKDNFKLPSILSNVETSLLQTKADVQDDTAMAQKLKKDTSNLYDRMSDYVDLSIQNFGTKNIKDSTPIPEATTRKTLVEPSSIDLEKSNEILAKKLSKVLNEYDTSYHHTIKLRKSLKILEKNRDKLGISEEKLISPDYIGTLARKSLRTDLETQLLKDHVTVLEDFKPIVRRIKRLAAPVQQIENIGEEILKNDKETFSQKYISDIDDCRNHLLKLEIKKKILKALQSKFTLNQLEDDLIENGPLKEEIFDIVDKLTKMKEHATYLLALPNSKAGEVLIKQTNITLDTINKKISNYLIDYMYTFESNSNMGTKHVIDPTERNLALFQKGLVYLSNDIQYYDDFLKRVTTMRSKTLLDEFLSQFGTTSELSTTISSSEDPVRYIGDVLATIHTMIANEVDFVKSLFKFTSEDMDKSSSMIINNNAQYFDGLDLKLVNDIVQYLANSCKLRIEQVIRFEENKVINFEITQLLDLYSSMFVNKGIRDDNPLVLHLIQLRDISEKKIINSLTKQLAETENTQISSPDLLPPQWLSDYLNSITELFDHVERLYGGKRFSKDDIDSDKYMFPYDTLKTVIEEPFMTSLIKQIKDSYPLAKKKEEIRIVMLTLQINCFEMINFRLQPYSLSIFSYDESCKHILENIQHTLDETVEKLQKLQISLLFERTGLNMYYNLMNMIFPIDSIQDEIDYDMYMSLVDNPLMSLENLEKNIHEKLNDYLPQALPDFQDNLLIKLTSPSIADDVCEICFRTLTDFYCIFRRILKHLYPDNKEKVEAILNFTESEFKTLAGV.

It belongs to the COG6 family.

The protein resides in the golgi apparatus membrane. Functionally, acts as a component of the peripheral membrane COG complex that is involved in intra-Golgi protein trafficking. COG is located at the cis-Golgi, and regulates tethering of retrograde intra-Golgi vesicles and possibly a number of other membrane trafficking events. The protein is Conserved oligomeric Golgi complex subunit 6 (COG6) of Candida glabrata (strain ATCC 2001 / BCRC 20586 / JCM 3761 / NBRC 0622 / NRRL Y-65 / CBS 138) (Yeast).